A 379-amino-acid polypeptide reads, in one-letter code: MIISASTDYRAAAKAKLPPFLFHYIDGGSYDERTLKRNTDDLGDVALRQRVLRDMTDLSLETEIFGEKLAMPIALAPVGLTGMYARRGEVQAAKAAEKKGIPFTMSTVSVCPIEEVAPAIERPMWFQLYVLKDRGFMKNVLERAKAAGVTTLVFTVDMPVPGARYRDMHSGMSGPNAAMRRVFQAMRHPSWALDVGLLGKPHDLGNISTYRGEPTKLEDYIGWLGANFDPSISWKDLEWIRDFWDGPMVIKGILDEEDAKDAVRFGADGIVVSNHGGRQLDGVLSTAKALPSIADAVKGDLKIFVDSGIRTGLDVVRMLALGADCTLLGRSFVYALAAQGGAGVENLLDLYDKEMRVAMTLTGAKTIADLSRDSLVKIP.

An FMN hydroxy acid dehydrogenase domain is found at 1 to 379; the sequence is MIISASTDYR…LSRDSLVKIP (379 aa). Substrate is bound at residue Tyr24. The FMN site is built by Ser106 and Gln127. Tyr129 is a substrate binding site. FMN is bound at residue Thr155. A substrate-binding site is contributed by Arg164. Lys251 contributes to the FMN binding site. His275 serves as the catalytic Proton acceptor. Arg278 lines the substrate pocket. 306-330 is a binding site for FMN; it reads DSGIRTGLDVVRMLALGADCTLLGR.

This sequence belongs to the FMN-dependent alpha-hydroxy acid dehydrogenase family. FMN is required as a cofactor.

The protein localises to the cell inner membrane. The catalysed reaction is (S)-lactate + A = pyruvate + AH2. Its function is as follows. Catalyzes the conversion of L-lactate to pyruvate. Is coupled to the respiratory chain. The protein is L-lactate dehydrogenase of Vibrio parahaemolyticus serotype O3:K6 (strain RIMD 2210633).